Reading from the N-terminus, the 1108-residue chain is Alpha-mannosidase 2 (1108 aa).

At 1 to 9 (MLRIRRRFA) the chain is on the cytoplasmic side. A helical; Signal-anchor for type II membrane protein membrane pass occupies residues 10 to 30 (LVICSGCLLVFLSLYIILNFA). Residues 31-1108 (APAATQIKPN…TAAYVSSHSS (1078 aa)) are Lumenal-facing. Residues 70–92 (AETSNRDDPIRPPLKVARSPRPG) are disordered. Zn(2+) is bound by residues H153, D155, D267, and H534. The Nucleophile role is filled by D267.

The protein belongs to the glycosyl hydrolase 38 family. Homodimer; disulfide-linked. Zn(2+) serves as cofactor.

Its subcellular location is the golgi apparatus membrane. The enzyme catalyses N(4)-{beta-D-GlcNAc-(1-&gt;2)-alpha-D-Man-(1-&gt;3)-[alpha-D-Man-(1-&gt;3)-[alpha-D-Man-(1-&gt;6)]-alpha-D-Man-(1-&gt;6)]-beta-D-Man-(1-&gt;4)-beta-D-GlcNAc-(1-&gt;4)-beta-D-GlcNAc}-L-asparaginyl-[protein] + 2 H2O = 2 alpha-D-mannopyranose + an N(4)-{beta-D-GlcNAc-(1-&gt;2)-alpha-D-Man-(1-&gt;3)-[alpha-D-Man-(1-&gt;6)]-beta-D-Man-(1-&gt;4)-beta-D-GlcNAc-(1-&gt;4)-beta-D-GlcNAc}-L-asparaginyl-[protein]. The protein operates within protein modification; protein glycosylation. In terms of biological role, catalyzes the first committed step in the biosynthesis of complex N-glycans. It controls conversion of high mannose to complex N-glycans; the final hydrolytic step in the N-glycan maturation pathway. This is Alpha-mannosidase 2 from Drosophila melanogaster (Fruit fly).